The following is a 285-amino-acid chain: Heme oxygenase 3, chloroplastic (285 aa).

A chloroplast-targeting transit peptide spans 1 to 58; it reads MATTRLNPSCHFPASTRLSCESYLGLRTTGRISYARTLTAPRGYLAVKANGGQASVVT. Position 89 (His89) interacts with heme b. Residues 89–105 show a composition bias toward basic and acidic residues; that stretch reads HTKDQAREGEKESRSPE. The disordered stretch occupies residues 89–109; the sequence is HTKDQAREGEKESRSPEEGPV.

This sequence belongs to the heme oxygenase family. As to expression, widely expressed at low levels.

It localises to the plastid. It is found in the chloroplast. The enzyme catalyses heme b + 3 reduced [NADPH--hemoprotein reductase] + 3 O2 = biliverdin IXalpha + CO + Fe(2+) + 3 oxidized [NADPH--hemoprotein reductase] + 3 H2O + H(+). Functionally, catalyzes the opening of the heme ring to form the open-chain tetrapyrrole biliverdin IX with the release of iron and carbon monoxide (CO). Produces specifically the biliverdin IX-alpha isomer. Plays a minor role in phytochrome assembly and photomorphogenesis. In Arabidopsis thaliana (Mouse-ear cress), this protein is Heme oxygenase 3, chloroplastic (HO3).